Here is a 238-residue protein sequence, read N- to C-terminus: Small ribosomal subunit protein uS2 (238 aa).

It belongs to the universal ribosomal protein uS2 family.

In Moorella thermoacetica (strain ATCC 39073 / JCM 9320), this protein is Small ribosomal subunit protein uS2.